Consider the following 846-residue polypeptide: Protein kintoun (846 aa).

Disordered stretches follow at residues 216-240, 372-405, 574-631, and 762-846; these read TAEEQEPHPLAHMFPTKPPAPGKPE, LRHFSREDSGVELHSNSESPVEEDPDGELSDSKA, QALK…ESAC, and KKNQ…EMDD. A compositionally biased stretch (basic and acidic residues) spans 372–382; that stretch reads LRHFSREDSGV. At S380 the chain carries Phosphoserine. Acidic residues predominate over residues 391–400; the sequence is PVEEDPDGEL. The segment covering 583-603 has biased composition (basic and acidic residues); that stretch reads GTKEEEEKGNQDQEPESDKQH. 2 stretches are compositionally biased toward basic residues: residues 611–622 and 762–776; these read KAGKKQRKRNKK and KKNQKRRDLKLRAQQ. S780 carries the post-translational modification Phosphoserine. The segment covering 795–809 has biased composition (polar residues); it reads LKQQENQSRNCNKPN.

Belongs to the PIH1 family. Kintoun subfamily. Interacts with Pp1alpha-96A, Pp1-87B, Pp1-13C and flw.

It localises to the cytoplasm. Its function is as follows. Required for cytoplasmic pre-assembly of axonemal dyneins, thereby playing a central role in motility in cilia and flagella. Involved in pre-assembly of dynein arm complexes in the cytoplasm before intraflagellar transport loads them for the ciliary compartment. This is Protein kintoun from Drosophila yakuba (Fruit fly).